The sequence spans 622 residues: Low affinity potassium transport system protein Kup (622 aa).

A run of 12 helical transmembrane segments spans residues 9-29 (LSAVTLAAIGVVYGDIGTSPL), 46-66 (PDVVFGFLSLIFWMLILVVSV), 101-121 (ILVVLGLIGGSFFYGEVVITP), 137-157 (PALDPYIVPCSIAVLTLLFVI), 165-185 (VGKLFAPVMLVWFLTLALLGL), 213-233 (VSFFALGAVVLAITGVEALYA), 247-267 (WFTVVLPSLVLNYFGQGALLL), 276-296 (PFFLLAPDWALIPLLILATLA), 337-357 (IYIPVINWTLYLAVVLVIIGF), 363-383 (LAAAYGIAVTGTMVITSILFC), 395-415 (FLVAFLLMVLLIIDIPMFSAN), and 416-436 (VLKLFSGGWLPLSLGLVMFII).

The protein belongs to the HAK/KUP transporter (TC 2.A.72) family.

The protein localises to the cell inner membrane. It carries out the reaction K(+)(in) + H(+)(in) = K(+)(out) + H(+)(out). In terms of biological role, responsible for the low-affinity transport of potassium into the cell. Likely operates as a K(+):H(+) symporter. The sequence is that of Low affinity potassium transport system protein Kup from Yersinia pseudotuberculosis serotype O:1b (strain IP 31758).